Consider the following 260-residue polypeptide: Troponin I 3 (260 aa).

The segment covering 192-219 (DLDEIMAKKKGTADGKPEWSKKEKKEEE) has biased composition (basic and acidic residues). The tract at residues 192–260 (DLDEIMAKKK…EEEEEEEEEE (69 aa)) is disordered. Residues 231-260 (PEAEPEPEAAEPAAEEPEAEEEEEEEEEEE) are compositionally biased toward acidic residues.

It belongs to the troponin I family. As to expression, expressed in body wall muscle from first larval stage to adult. In adults expression is predominantly in vulval and anal muscles, body wall muscle expression is weaker. Also expressed in vulval muscles of hermaphrodites and the sex muscles of males.

In terms of biological role, troponin I is the inhibitory subunit of troponin, the thin filament regulatory complex which confers calcium-sensitivity to muscle actomyosin ATPase activity. The sequence is that of Troponin I 3 (tni-3) from Caenorhabditis elegans.